A 404-amino-acid polypeptide reads, in one-letter code: tRNA/tmRNA (uracil-C(5))-methyltransferase (404 aa).

S-adenosyl-L-methionine-binding residues include Gln218, Tyr251, Asn256, Glu272, and Asp332. The active-site Nucleophile is Cys358. Glu392 serves as the catalytic Proton acceptor.

The protein belongs to the class I-like SAM-binding methyltransferase superfamily. RNA M5U methyltransferase family. TrmA subfamily.

It carries out the reaction uridine(54) in tRNA + S-adenosyl-L-methionine = 5-methyluridine(54) in tRNA + S-adenosyl-L-homocysteine + H(+). The catalysed reaction is uridine(341) in tmRNA + S-adenosyl-L-methionine = 5-methyluridine(341) in tmRNA + S-adenosyl-L-homocysteine + H(+). Dual-specificity methyltransferase that catalyzes the formation of 5-methyluridine at position 54 (m5U54) in all tRNAs, and that of position 341 (m5U341) in tmRNA (transfer-mRNA). The polypeptide is tRNA/tmRNA (uracil-C(5))-methyltransferase (Helicobacter hepaticus (strain ATCC 51449 / 3B1)).